Reading from the N-terminus, the 398-residue chain is UPF0496 protein At5g66660 (398 aa).

Helical transmembrane passes span 240 to 260 and 263 to 283; these read VFFA…TTMS and PVVC…GKWF.

It belongs to the UPF0496 family.

Its subcellular location is the membrane. This is UPF0496 protein At5g66660 from Arabidopsis thaliana (Mouse-ear cress).